A 457-amino-acid polypeptide reads, in one-letter code: Siroheme synthase (457 aa).

Residues 1-204 (MDHLPIFCQL…NDQKAITETT (204 aa)) are precorrin-2 dehydrogenase /sirohydrochlorin ferrochelatase. Residues 22–23 (DV) and 43–44 (LA) each bind NAD(+). A Phosphoserine modification is found at serine 128. The segment at 216-457 (GEVVLVGAGP…RDKLNWFSNH (242 aa)) is uroporphyrinogen-III C-methyltransferase. Proline 225 serves as a coordination point for S-adenosyl-L-methionine. Aspartate 248 (proton acceptor) is an active-site residue. Catalysis depends on lysine 270, which acts as the Proton donor. S-adenosyl-L-methionine is bound by residues 301-303 (GGD), isoleucine 306, 331-332 (TA), methionine 382, and glycine 411.

It in the N-terminal section; belongs to the precorrin-2 dehydrogenase / sirohydrochlorin ferrochelatase family. The protein in the C-terminal section; belongs to the precorrin methyltransferase family.

It carries out the reaction uroporphyrinogen III + 2 S-adenosyl-L-methionine = precorrin-2 + 2 S-adenosyl-L-homocysteine + H(+). The catalysed reaction is precorrin-2 + NAD(+) = sirohydrochlorin + NADH + 2 H(+). The enzyme catalyses siroheme + 2 H(+) = sirohydrochlorin + Fe(2+). Its pathway is cofactor biosynthesis; adenosylcobalamin biosynthesis; precorrin-2 from uroporphyrinogen III: step 1/1. It participates in cofactor biosynthesis; adenosylcobalamin biosynthesis; sirohydrochlorin from precorrin-2: step 1/1. The protein operates within porphyrin-containing compound metabolism; siroheme biosynthesis; precorrin-2 from uroporphyrinogen III: step 1/1. It functions in the pathway porphyrin-containing compound metabolism; siroheme biosynthesis; siroheme from sirohydrochlorin: step 1/1. Its pathway is porphyrin-containing compound metabolism; siroheme biosynthesis; sirohydrochlorin from precorrin-2: step 1/1. Multifunctional enzyme that catalyzes the SAM-dependent methylations of uroporphyrinogen III at position C-2 and C-7 to form precorrin-2 via precorrin-1. Then it catalyzes the NAD-dependent ring dehydrogenation of precorrin-2 to yield sirohydrochlorin. Finally, it catalyzes the ferrochelation of sirohydrochlorin to yield siroheme. This is Siroheme synthase from Escherichia coli O8 (strain IAI1).